The chain runs to 257 residues: Putative hydro-lyase Bcep18194_B2576 (257 aa).

The protein belongs to the D-glutamate cyclase family.

The protein is Putative hydro-lyase Bcep18194_B2576 of Burkholderia lata (strain ATCC 17760 / DSM 23089 / LMG 22485 / NCIMB 9086 / R18194 / 383).